The sequence spans 216 residues: Inactive ribonuclease-like protein 10 (216 aa).

A signal peptide spans 1–26 (MKLNLVQIFFMLLMLLLGLGMGLGLG). The tract at residues 43-65 (EFWSSDSQDKAEATEEGDGTQTT) is disordered.

The protein belongs to the pancreatic ribonuclease family. Post-translationally, the N-terminus is blocked. Glycosylated.

It is found in the secreted. In terms of biological role, secreted proximal epididymal protein required for post-testicular sperm maturation and male fertility. May be involved in sperm adhesion to the egg zona pellucida. Does not have ribonuclease activity. This chain is Inactive ribonuclease-like protein 10 (RNASE10), found in Homo sapiens (Human).